Consider the following 311-residue polypeptide: Olfactory receptor 8G1 (311 aa).

Residues 1–25 (MSGENNSSVTEFILAGLSEQPELQL) lie on the Extracellular side of the membrane. N-linked (GlcNAc...) asparagine glycosylation is found at Asn-5 and Asn-6. A helical transmembrane segment spans residues 26–46 (PLFLLFLGIYVVTVVGNLGMT). Over 47–54 (TLIWLSSH) the chain is Cytoplasmic. Residues 55–75 (LHTPMYYFLSSLSFIDFCHST) traverse the membrane as a helical segment. The Extracellular segment spans residues 76–99 (VITPKMLVNFVTEKNIISYPECMT). Cysteines 97 and 189 form a disulfide. The chain crosses the membrane as a helical span at residues 100-120 (QLYFFLVFAIAECHMLAAMAY). Topologically, residues 121–139 (DRYMAICSPLLYSVIISNK) are cytoplasmic. A helical transmembrane segment spans residues 140–160 (ACFSLILGVYIIGLVCASVHT). The Extracellular segment spans residues 161–197 (GCMFRVQFCKFDLINHYFCDLLPLLKLSCSSIYVNKL). The helical transmembrane segment at 198–217 (LILCVGAFNILVPSLTILCS) threads the bilayer. Residues 218–237 (YIFIIASILHIRSTEGRSKA) are Cytoplasmic-facing. Residues 238–258 (FSTCSSHMLAVVIFFGSAAFM) traverse the membrane as a helical segment. Over 259–271 (YLQPSSISSMDQG) the chain is Extracellular. The chain crosses the membrane as a helical span at residues 272 to 292 (KVSSVFYTIIVPMLNPLIYSL). Residues 293–311 (RNKDVHVSLKKMLQRRTLL) lie on the Cytoplasmic side of the membrane.

It belongs to the G-protein coupled receptor 1 family.

It is found in the cell membrane. Functionally, odorant receptor. In Homo sapiens (Human), this protein is Olfactory receptor 8G1 (OR8G1).